Reading from the N-terminus, the 416-residue chain is Diaminopimelate decarboxylase (416 aa).

Lys60 bears the N6-(pyridoxal phosphate)lysine mark. Pyridoxal 5'-phosphate is bound by residues Gly240 and 274–277 (EPGR). 3 residues coordinate substrate: Arg277, Arg313, and Tyr317. Cys343 (proton donor) is an active-site residue. Substrate-binding residues include Glu344 and Tyr371. Tyr371 contributes to the pyridoxal 5'-phosphate binding site.

This sequence belongs to the Orn/Lys/Arg decarboxylase class-II family. LysA subfamily. As to quaternary structure, homodimer. Requires pyridoxal 5'-phosphate as cofactor.

The enzyme catalyses meso-2,6-diaminopimelate + H(+) = L-lysine + CO2. Its pathway is amino-acid biosynthesis; L-lysine biosynthesis via DAP pathway; L-lysine from DL-2,6-diaminopimelate: step 1/1. Its function is as follows. Specifically catalyzes the decarboxylation of meso-diaminopimelate (meso-DAP) to L-lysine. The chain is Diaminopimelate decarboxylase from Pseudomonas fluorescens.